The sequence spans 382 residues: D-galactonate dehydratase (382 aa).

D183 is a binding site for Mg(2+). H185 (proton donor) is an active-site residue. Residues E209 and E235 each coordinate Mg(2+). Catalysis depends on H285, which acts as the Proton acceptor.

This sequence belongs to the mandelate racemase/muconate lactonizing enzyme family. GalD subfamily. Requires Mg(2+) as cofactor.

The enzyme catalyses D-galactonate = 2-dehydro-3-deoxy-D-galactonate + H2O. The protein operates within carbohydrate acid metabolism; D-galactonate degradation; D-glyceraldehyde 3-phosphate and pyruvate from D-galactonate: step 1/3. Its function is as follows. Catalyzes the dehydration of D-galactonate to 2-keto-3-deoxy-D-galactonate. This is D-galactonate dehydratase from Klebsiella pneumoniae (strain 342).